Reading from the N-terminus, the 299-residue chain is Pentalenolactone F synthase (299 aa).

His105 and Asp107 together coordinate Fe cation. 2 residues coordinate 2-oxoglutarate: Thr133 and Trp251. His266 contributes to the Fe cation binding site. A 2-oxoglutarate-binding site is contributed by Arg277.

This sequence belongs to the TfdA dioxygenase family. Fe(2+) serves as cofactor.

The enzyme catalyses pentalenolactone D + 2 2-oxoglutarate + 2 O2 = pentalenolactone F + 2 succinate + 2 CO2 + H2O. Its pathway is antibiotic biosynthesis; pentalenolactone biosynthesis. Activated by ascorbate. Functionally, catalyzes the Fe(2+) and alpha-ketoglutarate-dependent oxidation of pentalenolactone D to pentalenolactone F in the biosynthesis of pentalenolactone antibiotic. Also able to catalyze the oxidation of pentalenolactone D to pentalenolactone E. This is Pentalenolactone F synthase (pntD) from Streptomyces arenae.